A 308-amino-acid chain; its full sequence is Ribonuclease H2 subunit B (308 aa).

Residue Ala2 is modified to N-acetylalanine. Lys292 carries the post-translational modification N6-acetyllysine. Ser293 is modified (phosphoserine).

Belongs to the RNase H2 subunit B family. In terms of assembly, the RNase H2 complex is a heterotrimer composed of the catalytic subunit RNASEH2A and the non-catalytic subunits RNASEH2B and RNASEH2C.

It localises to the nucleus. Non catalytic subunit of RNase H2, an endonuclease that specifically degrades the RNA of RNA:DNA hybrids. Participates in DNA replication, possibly by mediating the removal of lagging-strand Okazaki fragment RNA primers during DNA replication. Mediates the excision of single ribonucleotides from DNA:RNA duplexes. The sequence is that of Ribonuclease H2 subunit B (Rnaseh2b) from Mus musculus (Mouse).